Reading from the N-terminus, the 276-residue chain is Dermonecrotic toxin LafSicTox-betaIE2 (276 aa).

Residue histidine 5 is part of the active site. Positions 25 and 27 each coordinate Mg(2+). The active-site Nucleophile is histidine 41. Cystine bridges form between cysteine 45-cysteine 51 and cysteine 47-cysteine 189. Aspartate 85 provides a ligand contact to Mg(2+).

It belongs to the arthropod phospholipase D family. Class II subfamily. Requires Mg(2+) as cofactor. Expressed by the venom gland.

The protein localises to the secreted. It carries out the reaction an N-(acyl)-sphingosylphosphocholine = an N-(acyl)-sphingosyl-1,3-cyclic phosphate + choline. The enzyme catalyses an N-(acyl)-sphingosylphosphoethanolamine = an N-(acyl)-sphingosyl-1,3-cyclic phosphate + ethanolamine. The catalysed reaction is a 1-acyl-sn-glycero-3-phosphocholine = a 1-acyl-sn-glycero-2,3-cyclic phosphate + choline. It catalyses the reaction a 1-acyl-sn-glycero-3-phosphoethanolamine = a 1-acyl-sn-glycero-2,3-cyclic phosphate + ethanolamine. In terms of biological role, dermonecrotic toxins cleave the phosphodiester linkage between the phosphate and headgroup of certain phospholipids (sphingolipid and lysolipid substrates), forming an alcohol (often choline) and a cyclic phosphate. This toxin acts on sphingomyelin (SM). It may also act on ceramide phosphoethanolamine (CPE), lysophosphatidylcholine (LPC) and lysophosphatidylethanolamine (LPE), but not on lysophosphatidylserine (LPS), and lysophosphatidylglycerol (LPG). It acts by transphosphatidylation, releasing exclusively cyclic phosphate products as second products. Induces dermonecrosis, hemolysis, increased vascular permeability, edema, inflammatory response, and platelet aggregation. The protein is Dermonecrotic toxin LafSicTox-betaIE2 of Loxosceles aff. spinulosa (strain GJB-2008) (Recluse spider).